We begin with the raw amino-acid sequence, 474 residues long: Ribulose bisphosphate carboxylase large chain (474 aa).

Substrate is bound by residues Asn122 and Thr172. Lys174 serves as the catalytic Proton acceptor. Lys176 is a substrate binding site. Residues Lys200, Asp202, and Glu203 each coordinate Mg(2+). Lys200 bears the N6-carboxylysine mark. The active-site Proton acceptor is the His293. Substrate contacts are provided by Arg294, His326, and Ser378.

This sequence belongs to the RuBisCO large chain family. Type I subfamily. In terms of assembly, heterohexadecamer of 8 large chains and 8 small chains; disulfide-linked. The disulfide link is formed within the large subunit homodimers. It depends on Mg(2+) as a cofactor. In terms of processing, the disulfide bond which can form in the large chain dimeric partners within the hexadecamer appears to be associated with oxidative stress and protein turnover.

Its subcellular location is the carboxysome. The enzyme catalyses 2 (2R)-3-phosphoglycerate + 2 H(+) = D-ribulose 1,5-bisphosphate + CO2 + H2O. It carries out the reaction D-ribulose 1,5-bisphosphate + O2 = 2-phosphoglycolate + (2R)-3-phosphoglycerate + 2 H(+). Its function is as follows. RuBisCO catalyzes two reactions: the carboxylation of D-ribulose 1,5-bisphosphate, the primary event in carbon dioxide fixation, as well as the oxidative fragmentation of the pentose substrate in the photorespiration process. Both reactions occur simultaneously and in competition at the same active site. The chain is Ribulose bisphosphate carboxylase large chain from Gloeobacter violaceus (strain ATCC 29082 / PCC 7421).